We begin with the raw amino-acid sequence, 436 residues long: Ribosomal protein uS12 methylthiotransferase RimO (436 aa).

One can recognise an MTTase N-terminal domain in the interval 4 to 122; sequence KRIDIITLGC…LLQDLGKTYH (119 aa). Residues Cys13, Cys51, Cys85, Cys146, Cys150, and Cys153 each contribute to the [4Fe-4S] cluster site. In terms of domain architecture, Radical SAM core spans 132–363; the sequence is TTPKHYAYLK…MDIQQGISAE (232 aa). The TRAM domain maps to 366 to 433; sequence AAKIGQQMKV…DFDLYAKILN (68 aa).

The protein belongs to the methylthiotransferase family. RimO subfamily. It depends on [4Fe-4S] cluster as a cofactor.

The protein resides in the cytoplasm. The catalysed reaction is L-aspartate(89)-[ribosomal protein uS12]-hydrogen + (sulfur carrier)-SH + AH2 + 2 S-adenosyl-L-methionine = 3-methylsulfanyl-L-aspartate(89)-[ribosomal protein uS12]-hydrogen + (sulfur carrier)-H + 5'-deoxyadenosine + L-methionine + A + S-adenosyl-L-homocysteine + 2 H(+). Catalyzes the methylthiolation of an aspartic acid residue of ribosomal protein uS12. The sequence is that of Ribosomal protein uS12 methylthiotransferase RimO from Bacteroides thetaiotaomicron (strain ATCC 29148 / DSM 2079 / JCM 5827 / CCUG 10774 / NCTC 10582 / VPI-5482 / E50).